A 524-amino-acid chain; its full sequence is Ribosomal protein uS12 methylthiotransferase RimO (524 aa).

Residues 20–31 (NSQTASDSTQPA) are compositionally biased toward polar residues. The tract at residues 20–59 (NSQTASDSTQPAASAYHHKANHNQNRSIEQSAQQAAEQSL) is disordered. The span at 48 to 58 (EQSAQQAAEQS) shows a compositional bias: low complexity. In terms of domain architecture, MTTase N-terminal spans 67 to 177 (PKVGFVSLGC…VITAVSTHAP (111 aa)). Residues Cys-76, Cys-112, Cys-141, Cys-216, Cys-220, and Cys-223 each contribute to the [4Fe-4S] cluster site. Positions 202–443 (LTPSHYAYLK…MAVQQQISEQ (242 aa)) constitute a Radical SAM core domain. The region spanning 446-519 (QEKVGKTMTV…EYDLFASYDA (74 aa)) is the TRAM domain.

It belongs to the methylthiotransferase family. RimO subfamily. It depends on [4Fe-4S] cluster as a cofactor.

It localises to the cytoplasm. It carries out the reaction L-aspartate(89)-[ribosomal protein uS12]-hydrogen + (sulfur carrier)-SH + AH2 + 2 S-adenosyl-L-methionine = 3-methylsulfanyl-L-aspartate(89)-[ribosomal protein uS12]-hydrogen + (sulfur carrier)-H + 5'-deoxyadenosine + L-methionine + A + S-adenosyl-L-homocysteine + 2 H(+). Its function is as follows. Catalyzes the methylthiolation of an aspartic acid residue of ribosomal protein uS12. This is Ribosomal protein uS12 methylthiotransferase RimO from Psychrobacter sp. (strain PRwf-1).